A 615-amino-acid chain; its full sequence is Elongation factor 4 (615 aa).

A tr-type G domain is found at 17–198 (ASIRNFCIIA…RVSRTIPAPV (182 aa)). GTP is bound by residues 29 to 34 (DHGKST) and 145 to 148 (NKID).

Belongs to the TRAFAC class translation factor GTPase superfamily. Classic translation factor GTPase family. LepA subfamily.

Its subcellular location is the cell membrane. The catalysed reaction is GTP + H2O = GDP + phosphate + H(+). Its function is as follows. Required for accurate and efficient protein synthesis under certain stress conditions. May act as a fidelity factor of the translation reaction, by catalyzing a one-codon backward translocation of tRNAs on improperly translocated ribosomes. Back-translocation proceeds from a post-translocation (POST) complex to a pre-translocation (PRE) complex, thus giving elongation factor G a second chance to translocate the tRNAs correctly. Binds to ribosomes in a GTP-dependent manner. The chain is Elongation factor 4 from Clavibacter sepedonicus (Clavibacter michiganensis subsp. sepedonicus).